The primary structure comprises 361 residues: Histidinol-phosphate aminotransferase (361 aa).

At lysine 223 the chain carries N6-(pyridoxal phosphate)lysine.

The protein belongs to the class-II pyridoxal-phosphate-dependent aminotransferase family. Histidinol-phosphate aminotransferase subfamily. In terms of assembly, homodimer. It depends on pyridoxal 5'-phosphate as a cofactor.

It carries out the reaction L-histidinol phosphate + 2-oxoglutarate = 3-(imidazol-4-yl)-2-oxopropyl phosphate + L-glutamate. It participates in amino-acid biosynthesis; L-histidine biosynthesis; L-histidine from 5-phospho-alpha-D-ribose 1-diphosphate: step 7/9. The sequence is that of Histidinol-phosphate aminotransferase from Deinococcus radiodurans (strain ATCC 13939 / DSM 20539 / JCM 16871 / CCUG 27074 / LMG 4051 / NBRC 15346 / NCIMB 9279 / VKM B-1422 / R1).